A 398-amino-acid polypeptide reads, in one-letter code: MTLDVTGLDVELAGTRILDDVHASIRDGHLVGVVGPNGAGKSTLLRAMNGLITPTAGTVLVAGDDVHALSSAAASRRIATVPQDASVSFEFTVRQVVEMGRHPHTTRFGTDTDTAVVDRAMARTGVAQFAARDVTSLSGGERQRVLLARALAQAAPVLLLDEPTASLDVNHQIRTLEVVRDLADSEDRAVVAAIHDLDLAARYCDELVVVADGRVHDAGAPRSVLTPDTIRAAFDARVAVGTDPATGAVTVTPLPDRTSAAADTSVHVVGGGDSATPVVRRLVSAGASVSVGPVVEGDTDHETARRVGCPCTSVAPFTRLEDTTAASATRADIAAADVIAVPVAAAARPGVRGLLTGAVPTLAVGDAAGAPEWADRLVACDAVVSAVGALADTPSDGV.

The region spanning 3 to 237 is the ABC transporter domain; it reads LDVTGLDVEL…DTIRAAFDAR (235 aa). 35 to 42 contributes to the ATP binding site; sequence GPNGAGKS.

Belongs to the ABC transporter superfamily. In terms of assembly, the complex is composed of two ATP-binding proteins (BtuD), two transmembrane proteins (BtuC) and a solute-binding protein (BtuF).

The protein localises to the cell membrane. It catalyses the reaction an R-cob(III)alamin(out) + ATP + H2O = an R-cob(III)alamin(in) + ADP + phosphate + H(+). Functionally, required for corrinoid utilization. Probably part of the ABC transporter complex BtuCDF involved in cobalamin (vitamin B12) import. Probably responsible for energy coupling to the transport system. This Halobacterium salinarum (strain ATCC 29341 / DSM 671 / R1) protein is Cobalamin import ATP-binding protein BtuD (btuD).